We begin with the raw amino-acid sequence, 338 residues long: L-asparaginase 1 (338 aa).

Residues 4-329 (KSIYVAYTGG…ETIRKAMSQN (326 aa)) form the Asparaginase/glutaminase domain. T14 acts as the O-isoaspartyl threonine intermediate in catalysis. Substrate contacts are provided by residues 59–61 (DSS) and 91–92 (TD).

The protein belongs to the asparaginase 1 family. Homotetramer.

Its subcellular location is the cytoplasm. It carries out the reaction L-asparagine + H2O = L-aspartate + NH4(+). This Escherichia coli O157:H7 protein is L-asparaginase 1 (ansA).